Consider the following 460-residue polypeptide: Argininosuccinate lyase (460 aa).

The protein belongs to the lyase 1 family. Argininosuccinate lyase subfamily.

The protein localises to the cytoplasm. It carries out the reaction 2-(N(omega)-L-arginino)succinate = fumarate + L-arginine. Its pathway is amino-acid biosynthesis; L-arginine biosynthesis; L-arginine from L-ornithine and carbamoyl phosphate: step 3/3. This chain is Argininosuccinate lyase, found in Nitratidesulfovibrio vulgaris (strain ATCC 29579 / DSM 644 / CCUG 34227 / NCIMB 8303 / VKM B-1760 / Hildenborough) (Desulfovibrio vulgaris).